The chain runs to 199 residues: Ribosome maturation factor RimM (199 aa).

Positions 100 to 195 constitute a PRC barrel domain; it reads ADEWYPKDLI…YLTLDPPGGL (96 aa).

This sequence belongs to the RimM family. Binds ribosomal protein uS19.

It localises to the cytoplasm. Its function is as follows. An accessory protein needed during the final step in the assembly of 30S ribosomal subunit, possibly for assembly of the head region. Essential for efficient processing of 16S rRNA. May be needed both before and after RbfA during the maturation of 16S rRNA. It has affinity for free ribosomal 30S subunits but not for 70S ribosomes. The chain is Ribosome maturation factor RimM from Bifidobacterium longum (strain DJO10A).